Reading from the N-terminus, the 281-residue chain is DegV domain-containing protein YqaC (281 aa).

In terms of domain architecture, DegV spans 3 to 279; it reads LAVITDSSAD…LNTVAYGISP (277 aa). Positions 60 and 93 each coordinate hexadecanoate.

May bind long-chain fatty acids, such as palmitate, and may play a role in lipid transport or fatty acid metabolism. The polypeptide is DegV domain-containing protein YqaC (yqaC) (Lactococcus lactis subsp. lactis (strain IL1403) (Streptococcus lactis)).